A 426-amino-acid chain; its full sequence is Trophoblast glycoprotein (426 aa).

A signal peptide spans 1 to 31 (MPGAGSRGPSAGDGRLRLARLALVLLGWVSA). The Extracellular portion of the chain corresponds to 32–361 (SAPSSSLPSS…ATLPQSLQTS (330 aa)). Over residues 34 to 51 (PSSSLPSSSTSPAAFLAS) the composition is skewed to low complexity. The tract at residues 34 to 54 (PSSSLPSSSTSPAAFLASGSA) is disordered. In terms of domain architecture, LRRNT spans 53-91 (SAQPPPAERCPAACECSEAARTVKCVNRNLLEVPADLPP). 2 cysteine pairs are disulfide-bonded: cysteine 62/cysteine 68 and cysteine 66/cysteine 77. LRR repeat units lie at residues 92–113 (YVRN…AFAR), 116–139 (PLAD…GAFE), and 141–163 (LPGL…FTFA). The N-linked (GlcNAc...) asparagine glycan is linked to asparagine 124. N-linked (GlcNAc...) asparagine glycosylation occurs at asparagine 166. LRR repeat units lie at residues 172 to 210 (PSPL…AALR), 215 to 238 (LRGL…LLDQ), 239 to 261 (LPSL…ASFR), and 262 to 281 (NLTH…VLHN). A glycan (N-linked (GlcNAc...) asparagine) is linked at asparagine 281. Positions 289 to 352 (GLAHVRVFLD…LTSSDLDCDA (64 aa)) constitute an LRRCT domain. 2 cysteine pairs are disulfide-bonded: cysteine 304–cysteine 329 and cysteine 306–cysteine 350. Residues 362–382 (YVFLGIVLALIGAIFLLVLYL) traverse the membrane as a helical segment. Residues 383–426 (NRKGIKKWMHNIRDACRDHMEGYHYRYEINADPRLTNLSSNSDV) lie on the Cytoplasmic side of the membrane. Serine 424 bears the Phosphoserine mark.

Post-translationally, highly glycosylated.

Its subcellular location is the cell membrane. In terms of biological role, may function as an inhibitor of Wnt/beta-catenin signaling by indirectly interacting with LRP6 and blocking Wnt3a-dependent LRP6 internalization. In Rattus norvegicus (Rat), this protein is Trophoblast glycoprotein (Tpbg).